The chain runs to 186 residues: L-2,4-diaminobutyric acid acetyltransferase (186 aa).

In terms of domain architecture, N-acetyltransferase spans 24–179; sequence YHLRPPRRND…HDDEMLLRIG (156 aa).

It belongs to the acetyltransferase family. EctA subfamily.

The catalysed reaction is L-2,4-diaminobutanoate + acetyl-CoA = (2S)-4-acetamido-2-aminobutanoate + CoA + H(+). Its pathway is amine and polyamine biosynthesis; ectoine biosynthesis; L-ectoine from L-aspartate 4-semialdehyde: step 2/3. In terms of biological role, catalyzes the acetylation of L-2,4-diaminobutyrate (DABA) to gamma-N-acetyl-alpha,gamma-diaminobutyric acid (ADABA) with acetyl coenzyme A. This is L-2,4-diaminobutyric acid acetyltransferase (ectA) from Bordetella parapertussis (strain 12822 / ATCC BAA-587 / NCTC 13253).